Reading from the N-terminus, the 103-residue chain is Putative defensin-like protein 305 (103 aa).

Residues 1–31 (MREEILEIFLLVNFVFILCTSIMVRIRYVSC) form the signal peptide. Intrachain disulfides connect C31–C51, C37–C56, and C42–C58.

This sequence belongs to the DEFL family.

The protein localises to the secreted. This is Putative defensin-like protein 305 from Arabidopsis thaliana (Mouse-ear cress).